The sequence spans 98 residues: Large ribosomal subunit protein uL23 (98 aa).

Belongs to the universal ribosomal protein uL23 family. In terms of assembly, part of the 50S ribosomal subunit. Contacts protein L29, and trigger factor when it is bound to the ribosome.

Functionally, one of the early assembly proteins it binds 23S rRNA. One of the proteins that surrounds the polypeptide exit tunnel on the outside of the ribosome. Forms the main docking site for trigger factor binding to the ribosome. In Clostridium acetobutylicum (strain ATCC 824 / DSM 792 / JCM 1419 / IAM 19013 / LMG 5710 / NBRC 13948 / NRRL B-527 / VKM B-1787 / 2291 / W), this protein is Large ribosomal subunit protein uL23.